Reading from the N-terminus, the 566-residue chain is Autophagy-related protein 22-1 (566 aa).

Residues 38–58 (YPIAAEVFAVVAVGAFLPVIL) traverse the membrane as a helical segment. A glycan (N-linked (GlcNAc...) asparagine) is linked at Asn-103. Helical transmembrane passes span 110–130 (SFAM…LVCF), 146–168 (AFAY…VYFL), and 179–199 (SLGC…ANHA). N-linked (GlcNAc...) asparagine glycosylation occurs at Asn-200. 8 consecutive transmembrane segments (helical) span residues 242-262 (GYGY…LWLF), 278-298 (VILL…LLWL), 351-371 (FLIS…TAVL), 382-402 (IAIA…AFAW), 416-436 (ILLC…LGFI), 451-471 (WEIY…SSYA), 488-510 (FALY…GWLV), and 519-539 (AFIF…MLDV). Positions 547–566 (KAMADGEGRGRGTYERVREE) are disordered.

Belongs to the ATG22 family.

The protein localises to the vacuole membrane. Functionally, vacuolar effluxer which mediate the efflux of amino acids resulting from autophagic degradation. The release of autophagic amino acids allows the maintenance of protein synthesis and viability during nitrogen starvation. This Phaeosphaeria nodorum (strain SN15 / ATCC MYA-4574 / FGSC 10173) (Glume blotch fungus) protein is Autophagy-related protein 22-1 (ATG22-1).